We begin with the raw amino-acid sequence, 227 residues long: Cytochrome c oxidase subunit 2 (227 aa).

Over Met1 to His26 the chain is Mitochondrial intermembrane. A helical membrane pass occupies residues Ala27–Asn48. Residues Lys49–Glu62 lie on the Mitochondrial matrix side of the membrane. The chain crosses the membrane as a helical span at residues Thr63–Arg82. Residues Leu83–Ala227 lie on the Mitochondrial intermembrane side of the membrane. Positions 161, 196, 198, 200, 204, and 207 each coordinate Cu cation. Residue Glu198 participates in Mg(2+) binding.

This sequence belongs to the cytochrome c oxidase subunit 2 family. As to quaternary structure, component of the cytochrome c oxidase (complex IV, CIV), a multisubunit enzyme composed of a catalytic core of 3 subunits and several supernumerary subunits. The complex exists as a monomer or a dimer and forms supercomplexes (SCs) in the inner mitochondrial membrane with ubiquinol-cytochrome c oxidoreductase (cytochrome b-c1 complex, complex III, CIII). It depends on Cu cation as a cofactor.

The protein localises to the mitochondrion inner membrane. The catalysed reaction is 4 Fe(II)-[cytochrome c] + O2 + 8 H(+)(in) = 4 Fe(III)-[cytochrome c] + 2 H2O + 4 H(+)(out). Component of the cytochrome c oxidase, the last enzyme in the mitochondrial electron transport chain which drives oxidative phosphorylation. The respiratory chain contains 3 multisubunit complexes succinate dehydrogenase (complex II, CII), ubiquinol-cytochrome c oxidoreductase (cytochrome b-c1 complex, complex III, CIII) and cytochrome c oxidase (complex IV, CIV), that cooperate to transfer electrons derived from NADH and succinate to molecular oxygen, creating an electrochemical gradient over the inner membrane that drives transmembrane transport and the ATP synthase. Cytochrome c oxidase is the component of the respiratory chain that catalyzes the reduction of oxygen to water. Electrons originating from reduced cytochrome c in the intermembrane space (IMS) are transferred via the dinuclear copper A center (CU(A)) of subunit 2 and heme A of subunit 1 to the active site in subunit 1, a binuclear center (BNC) formed by heme A3 and copper B (CU(B)). The BNC reduces molecular oxygen to 2 water molecules using 4 electrons from cytochrome c in the IMS and 4 protons from the mitochondrial matrix. The chain is Cytochrome c oxidase subunit 2 (COII) from Sitophilus granarius (Granary weevil).